The following is a 391-amino-acid chain: Digeranylgeranylglycerophospholipid reductase (391 aa).

The FAD site is built by Gly13, Glu32, Cys43, Ala44, Gly46, Arg97, Ala121, Asp277, Gly289, and Ile290.

The protein belongs to the geranylgeranyl reductase family. DGGGPL reductase subfamily. Requires FAD as cofactor.

It carries out the reaction a 2,3-bis-O-phytanyl-sn-glycerol 1-phospholipid + 8 oxidized 2[4Fe-4S]-[ferredoxin] = a 2,3-bis-O-(geranylgeranyl)-sn-glycerol 1-phospholipid + 8 reduced 2[4Fe-4S]-[ferredoxin] + 16 H(+). It catalyses the reaction 2,3-bis-O-(phytanyl)-sn-glycerol 1-phosphate + 8 oxidized 2[4Fe-4S]-[ferredoxin] = 2,3-bis-O-(geranylgeranyl)-sn-glycerol 1-phosphate + 8 reduced 2[4Fe-4S]-[ferredoxin] + 16 H(+). The catalysed reaction is a 2,3-bis-O-phytanyl-sn-glycerol 1-phospholipid + 8 A = a 2,3-bis-O-(geranylgeranyl)-sn-glycerol 1-phospholipid + 8 AH2. The enzyme catalyses CDP-2,3-bis-O-(geranylgeranyl)-sn-glycerol + 8 AH2 = CDP-2,3-bis-O-(phytanyl)-sn-glycerol + 8 A. It carries out the reaction archaetidylserine + 8 AH2 = 2,3-bis-O-phytanyl-sn-glycero-3-phospho-L-serine + 8 A. It functions in the pathway membrane lipid metabolism; glycerophospholipid metabolism. Is involved in the reduction of 2,3-digeranylgeranylglycerophospholipids (unsaturated archaeols) into 2,3-diphytanylglycerophospholipids (saturated archaeols) in the biosynthesis of archaeal membrane lipids. Catalyzes the formation of archaetidic acid (2,3-di-O-phytanyl-sn-glyceryl phosphate) from 2,3-di-O-geranylgeranylglyceryl phosphate (DGGGP) via the hydrogenation of each double bond of the isoprenoid chains. Is also probably able to reduce double bonds of geranyl groups in CDP-2,3-bis-O-(geranylgeranyl)-sn-glycerol and archaetidylserine, thus acting at various stages in the biosynthesis of archaeal membrane lipids. The polypeptide is Digeranylgeranylglycerophospholipid reductase (Methanothrix thermoacetophila (strain DSM 6194 / JCM 14653 / NBRC 101360 / PT) (Methanosaeta thermophila)).